We begin with the raw amino-acid sequence, 295 residues long: NAD kinase (295 aa).

Catalysis depends on Asp-72, which acts as the Proton acceptor. Residues 72–73, 146–147, Arg-157, Lys-174, Asp-176, 187–192, and Gln-247 contribute to the NAD(+) site; these read DG, ND, and TAYALS.

Belongs to the NAD kinase family. A divalent metal cation serves as cofactor.

The protein resides in the cytoplasm. The catalysed reaction is NAD(+) + ATP = ADP + NADP(+) + H(+). In terms of biological role, involved in the regulation of the intracellular balance of NAD and NADP, and is a key enzyme in the biosynthesis of NADP. Catalyzes specifically the phosphorylation on 2'-hydroxyl of the adenosine moiety of NAD to yield NADP. This chain is NAD kinase, found in Ectopseudomonas mendocina (strain ymp) (Pseudomonas mendocina).